We begin with the raw amino-acid sequence, 136 residues long: Large ribosomal subunit protein uL16 (136 aa).

It belongs to the universal ribosomal protein uL16 family. Part of the 50S ribosomal subunit.

Binds 23S rRNA and is also seen to make contacts with the A and possibly P site tRNAs. This Actinobacillus pleuropneumoniae serotype 5b (strain L20) protein is Large ribosomal subunit protein uL16.